The following is a 291-amino-acid chain: Probable cell wall amidase LytH (291 aa).

Residues 1–40 form the signal peptide; sequence MKKIDSWLTKHGLKNRLTLVVIVIFIIFLILLFMFVNLSD. The SH3b domain occupies 41–105; the sequence is EDTGQITITE…WVAGWHTNLN (65 aa). The MurNAc-LAA domain maps to 122-286; that stretch reads IVLDPGHGGS…VEQAIVDGLK (165 aa). Residues 123 to 147 form a disordered region; sequence VLDPGHGGSDQGASSSTPSKSLEKN. A compositionally biased stretch (polar residues) spans 133 to 142; the sequence is QGASSSTPSK.

This sequence belongs to the N-acetylmuramoyl-L-alanine amidase 3 family.

The protein resides in the secreted. Functionally, probably involved in cell-wall metabolism. The protein is Probable cell wall amidase LytH (lytH) of Staphylococcus epidermidis (strain ATCC 35984 / DSM 28319 / BCRC 17069 / CCUG 31568 / BM 3577 / RP62A).